A 534-amino-acid polypeptide reads, in one-letter code: Bifunctional pantoate ligase/cytidylate kinase (534 aa).

Positions 1–302 are pantoate--beta-alanine ligase; the sequence is MRLLTTVAAL…LGSTRLIDNT (302 aa). 48-55 contributes to the ATP binding site; it reads MGSLHQGH. Histidine 55 (proton donor) is an active-site residue. Glutamine 79 provides a ligand contact to (R)-pantoate. Residue glutamine 79 participates in beta-alanine binding. 172–175 serves as a coordination point for ATP; it reads GQKD. Glutamine 178 serves as a coordination point for (R)-pantoate. ATP is bound by residues valine 201 and 209–212; that span reads CSSR. The tract at residues 303 to 534 is cytidylate kinase; it reads ILRDRQPIIA…DYYQQRLSQW (232 aa).

This sequence in the N-terminal section; belongs to the pantothenate synthetase family. The protein in the C-terminal section; belongs to the cytidylate kinase family. Type 1 subfamily.

The protein resides in the cytoplasm. The catalysed reaction is (R)-pantoate + beta-alanine + ATP = (R)-pantothenate + AMP + diphosphate + H(+). It carries out the reaction CMP + ATP = CDP + ADP. It catalyses the reaction dCMP + ATP = dCDP + ADP. It participates in cofactor biosynthesis; (R)-pantothenate biosynthesis; (R)-pantothenate from (R)-pantoate and beta-alanine: step 1/1. Its function is as follows. Catalyzes the condensation of pantoate with beta-alanine in an ATP-dependent reaction via a pantoyl-adenylate intermediate. In terms of biological role, catalyzes the transfer of a phosphate group from ATP to either CMP or dCMP to form CDP or dCDP and ADP, respectively. This is Bifunctional pantoate ligase/cytidylate kinase from Trichormus variabilis (strain ATCC 29413 / PCC 7937) (Anabaena variabilis).